The chain runs to 105 residues: Co-chaperonin GroES (105 aa).

Belongs to the GroES chaperonin family. As to quaternary structure, heptamer of 7 subunits arranged in a ring. Interacts with the chaperonin GroEL.

The protein resides in the cytoplasm. Functionally, together with the chaperonin GroEL, plays an essential role in assisting protein folding. The GroEL-GroES system forms a nano-cage that allows encapsulation of the non-native substrate proteins and provides a physical environment optimized to promote and accelerate protein folding. GroES binds to the apical surface of the GroEL ring, thereby capping the opening of the GroEL channel. The sequence is that of Co-chaperonin GroES from Methylovorus sp. (strain SS1 / DSM 11726).